Here is a 142-residue protein sequence, read N- to C-terminus: Hemoglobin subunit alpha-A (142 aa).

Residues 2–142 (VLSANDKSNV…VGTVLTAKYR (141 aa)) enclose the Globin domain. His-59 serves as a coordination point for O2. His-88 provides a ligand contact to heme b.

This sequence belongs to the globin family. Heterotetramer of two alpha chains and two beta chains. Red blood cells.

Involved in oxygen transport from the lung to the various peripheral tissues. The protein is Hemoglobin subunit alpha-A (HBAA) of Columba livia (Rock dove).